A 196-amino-acid chain; its full sequence is Carnitine operon protein CaiE (196 aa).

The tract at residues 174–196 (QPLRQMEENRPRLQGTTDVTPKR) is disordered. The span at 187-196 (QGTTDVTPKR) shows a compositional bias: polar residues.

It belongs to the transferase hexapeptide repeat family.

The protein operates within amine and polyamine metabolism; carnitine metabolism. Its function is as follows. Overproduction of CaiE stimulates the activity of CaiB and CaiD. In Escherichia coli (strain K12), this protein is Carnitine operon protein CaiE (caiE).